The primary structure comprises 180 residues: NAD(P)H-quinone oxidoreductase subunit I, chloroplastic (180 aa).

4Fe-4S ferredoxin-type domains follow at residues 55–84 and 95–124; these read GRIHFEFDKCIACEVCVRVCPIDLPLVDWR and LNYSIDFGVCIFCGNCVEYCPTNCLSMTEE. Residues C64, C67, C70, C74, C104, C107, C110, and C114 each contribute to the [4Fe-4S] cluster site.

This sequence belongs to the complex I 23 kDa subunit family. As to quaternary structure, NDH is composed of at least 16 different subunits, 5 of which are encoded in the nucleus. It depends on [4Fe-4S] cluster as a cofactor.

It is found in the plastid. The protein localises to the chloroplast thylakoid membrane. The enzyme catalyses a plastoquinone + NADH + (n+1) H(+)(in) = a plastoquinol + NAD(+) + n H(+)(out). It carries out the reaction a plastoquinone + NADPH + (n+1) H(+)(in) = a plastoquinol + NADP(+) + n H(+)(out). In terms of biological role, NDH shuttles electrons from NAD(P)H:plastoquinone, via FMN and iron-sulfur (Fe-S) centers, to quinones in the photosynthetic chain and possibly in a chloroplast respiratory chain. The immediate electron acceptor for the enzyme in this species is believed to be plastoquinone. Couples the redox reaction to proton translocation, and thus conserves the redox energy in a proton gradient. The sequence is that of NAD(P)H-quinone oxidoreductase subunit I, chloroplastic from Zea mays (Maize).